Here is a 501-residue protein sequence, read N- to C-terminus: O-phosphoseryl-tRNA(Sec) selenium transferase (501 aa).

The segment at 1–44 (MNRESFAAGERLVSPAYVRQGCEARRSHEHLIRLLLEKGKCPEN) is tetramerization. S14 is subject to Phosphoserine. R75 provides a ligand contact to pyridoxal 5'-phosphate. The segment at 96–106 (GRSGDISAVQP) is phosphate loop (P-loop). Residues R97, S98, and Q105 each coordinate substrate. Position 271 (R271) interacts with tRNA. K284 bears the N6-(pyridoxal phosphate)lysine mark. Residue R313 coordinates substrate. Residues R398 and K463 each contribute to the tRNA site. The tract at residues 474–493 (DKTEDVDIEEMALKLDNVLL) is SLA/LP epitope.

Belongs to the SepSecS family. Homotetramer formed by a catalytic dimer and a non-catalytic dimer serving as a binding platform that orients tRNASec for catalysis. Each tetramer binds the CCA ends of two tRNAs which point to the active sites of the catalytic dimer. Pyridoxal 5'-phosphate serves as cofactor. Primarily expressed in liver, pancreas, kidney and lung. Overexpressed in PHA-stimulated T-cells.

Its subcellular location is the cytoplasm. The enzyme catalyses O-phospho-L-seryl-tRNA(Sec) + selenophosphate + H2O = L-selenocysteinyl-tRNA(Sec) + 2 phosphate. The protein operates within aminoacyl-tRNA biosynthesis; selenocysteinyl-tRNA(Sec) biosynthesis; selenocysteinyl-tRNA(Sec) from L-seryl-tRNA(Sec) (archaeal/eukaryal route): step 2/2. Functionally, converts O-phosphoseryl-tRNA(Sec) to selenocysteinyl-tRNA(Sec) required for selenoprotein biosynthesis. The protein is O-phosphoseryl-tRNA(Sec) selenium transferase (SEPSECS) of Homo sapiens (Human).